The following is a 60-amino-acid chain: Cytotoxin 7 (60 aa).

4 disulfide bridges follow: Cys3/Cys21, Cys14/Cys38, Cys42/Cys53, and Cys54/Cys59.

Belongs to the three-finger toxin family. Short-chain subfamily. Type IA cytotoxin sub-subfamily. As to quaternary structure, monomer in solution; Homodimer and oligomer in the presence of negatively charged lipids forming a pore with a size ranging between 20 and 30 Angstroms. In terms of tissue distribution, expressed by the venom gland.

Its subcellular location is the secreted. The protein localises to the target cell membrane. Shows cytolytic activity on many different cells by forming pore in lipid membranes. In vivo, increases heart rate or kills the animal by cardiac arrest. In addition, it binds to heparin with high affinity, interacts with Kv channel-interacting protein 1 (KCNIP1) in a calcium-independent manner, and binds to integrin alpha-V/beta-3 (ITGAV/ITGB3) with moderate affinity. This Naja annulifera (Banded Egyptian cobra) protein is Cytotoxin 7.